The sequence spans 362 residues: Peptide chain release factor 1 (362 aa).

Gln237 carries the post-translational modification N5-methylglutamine.

This sequence belongs to the prokaryotic/mitochondrial release factor family. Methylated by PrmC. Methylation increases the termination efficiency of RF1.

Its subcellular location is the cytoplasm. Its function is as follows. Peptide chain release factor 1 directs the termination of translation in response to the peptide chain termination codons UAG and UAA. The sequence is that of Peptide chain release factor 1 (prfA) from Aquifex aeolicus (strain VF5).